We begin with the raw amino-acid sequence, 157 residues long: Ribosome maturation factor RimP (157 aa).

The protein belongs to the RimP family.

The protein resides in the cytoplasm. Functionally, required for maturation of 30S ribosomal subunits. The protein is Ribosome maturation factor RimP of Geobacillus kaustophilus (strain HTA426).